The following is a 371-amino-acid chain: 4-hydroxy-3-methylbut-2-en-1-yl diphosphate synthase (flavodoxin) (371 aa).

Positions 270, 273, 305, and 312 each coordinate [4Fe-4S] cluster.

The protein belongs to the IspG family. [4Fe-4S] cluster serves as cofactor.

The enzyme catalyses (2E)-4-hydroxy-3-methylbut-2-enyl diphosphate + oxidized [flavodoxin] + H2O + 2 H(+) = 2-C-methyl-D-erythritol 2,4-cyclic diphosphate + reduced [flavodoxin]. Its pathway is isoprenoid biosynthesis; isopentenyl diphosphate biosynthesis via DXP pathway; isopentenyl diphosphate from 1-deoxy-D-xylulose 5-phosphate: step 5/6. Functionally, converts 2C-methyl-D-erythritol 2,4-cyclodiphosphate (ME-2,4cPP) into 1-hydroxy-2-methyl-2-(E)-butenyl 4-diphosphate. This Shewanella woodyi (strain ATCC 51908 / MS32) protein is 4-hydroxy-3-methylbut-2-en-1-yl diphosphate synthase (flavodoxin).